Reading from the N-terminus, the 104-residue chain is UPF0473 protein LGAS_0424 (104 aa).

This sequence belongs to the UPF0473 family.

The protein is UPF0473 protein LGAS_0424 of Lactobacillus gasseri (strain ATCC 33323 / DSM 20243 / BCRC 14619 / CIP 102991 / JCM 1131 / KCTC 3163 / NCIMB 11718 / NCTC 13722 / AM63).